The following is a 211-amino-acid chain: MHSIAIFGGTFDPVHNGHIKTSLAIQANFGFDSYYFLPCKSPAIKPPSFASSEQRVEMLKLALKPYPDFKIDTRELDRDTPSYMVYTLQSFRQEYTDSSLTLIIGYDGLLTLPQWYQWEKIISLANLLVINREEFFQQPVPKSVQTLLNQYRNDDKNILLNHHAGSICLYNAGHYDISSTKIREQLKQHKDVKNNLPDLVYDYIKKQGLYQ.

The protein belongs to the NadD family.

The catalysed reaction is nicotinate beta-D-ribonucleotide + ATP + H(+) = deamido-NAD(+) + diphosphate. Its pathway is cofactor biosynthesis; NAD(+) biosynthesis; deamido-NAD(+) from nicotinate D-ribonucleotide: step 1/1. Its function is as follows. Catalyzes the reversible adenylation of nicotinate mononucleotide (NaMN) to nicotinic acid adenine dinucleotide (NaAD). The polypeptide is Probable nicotinate-nucleotide adenylyltransferase (Legionella pneumophila (strain Corby)).